We begin with the raw amino-acid sequence, 290 residues long: N-acetylmannosamine kinase (290 aa).

ATP-binding positions include 5–12 (AIDIGGTK) and 132–139 (GVGGGVVS). Residues His-156, Cys-166, Cys-168, and Cys-173 each coordinate Zn(2+).

It belongs to the ROK (NagC/XylR) family. NanK subfamily. In terms of assembly, homodimer.

It carries out the reaction an N-acyl-D-mannosamine + ATP = an N-acyl-D-mannosamine 6-phosphate + ADP + H(+). Its pathway is amino-sugar metabolism; N-acetylneuraminate degradation; D-fructose 6-phosphate from N-acetylneuraminate: step 2/5. In terms of biological role, catalyzes the phosphorylation of N-acetylmannosamine (ManNAc) to ManNAc-6-P. This Citrobacter koseri (strain ATCC BAA-895 / CDC 4225-83 / SGSC4696) protein is N-acetylmannosamine kinase.